The sequence spans 641 residues: Fibrinogen alpha-2 chain (641 aa).

The signal sequence occupies residues 1-23 (MTLRGVSMVLTWCLLVSKAWSSG). The stretch at 107–226 (SVSDVSNQVV…IVHESFSVER (120 aa)) forms a coiled coil. Residues 228–327 (DARSLHPYSG…QKTEELSFKK (100 aa)) are disordered. N271 is a glycosylation site (N-linked (GlcNAc...) asparagine). The span at 279 to 289 (VDERSKVEKDV) shows a compositional bias: basic and acidic residues. The span at 293-317 (STSSVSSSSSSSSSSSSTSSTISST) shows a compositional bias: low complexity. A Fibrinogen C-terminal domain is found at 395–636 (RTNLSEYIDC…RTAVRFRRVQ (242 aa)). A glycan (N-linked (GlcNAc...) asparagine) is linked at N397. C404 and C435 are disulfide-bonded. N-linked (GlcNAc...) asparagine glycosylation occurs at N458. A disulfide bond links C571 and C584.

Heterohexamer; disulfide linked. Contains 2 sets of 3 non-identical chains (alpha, beta and gamma). The 2 heterotrimers are in head to head conformation with the N-termini in a small central domain. In terms of processing, conversion of fibrinogen to fibrin is triggered by thrombin, which cleaves fibrinopeptides A and B from alpha and beta chains, and thus exposes the N-terminal polymerization sites responsible for the formation of the soft clot. The soft clot is converted into the hard clot by factor XIIIA which catalyzes the epsilon-(gamma-glutamyl)lysine cross-linking between gamma chains (stronger) and between alpha chains (weaker) of different monomers. Forms F13A-mediated cross-links between a glutamine and the epsilon-amino group of a lysine residue, forming fibronectin-fibrinogen heteropolymers.

The protein resides in the secreted. Functionally, fibrinogen has a double function: yielding monomers that polymerize into fibrin and acting as a cofactor in platelet aggregation. The sequence is that of Fibrinogen alpha-2 chain from Petromyzon marinus (Sea lamprey).